We begin with the raw amino-acid sequence, 72 residues long: Translation initiation factor IF-1 (72 aa).

The S1-like domain occupies 1 to 72; the sequence is MAKTDLLEVQ…ERGRIVFRHK (72 aa).

The protein belongs to the IF-1 family. Component of the 30S ribosomal translation pre-initiation complex which assembles on the 30S ribosome in the order IF-2 and IF-3, IF-1 and N-formylmethionyl-tRNA(fMet); mRNA recruitment can occur at any time during PIC assembly.

The protein localises to the cytoplasm. One of the essential components for the initiation of protein synthesis. Stabilizes the binding of IF-2 and IF-3 on the 30S subunit to which N-formylmethionyl-tRNA(fMet) subsequently binds. Helps modulate mRNA selection, yielding the 30S pre-initiation complex (PIC). Upon addition of the 50S ribosomal subunit IF-1, IF-2 and IF-3 are released leaving the mature 70S translation initiation complex. The chain is Translation initiation factor IF-1 from Spiroplasma kunkelii.